The following is a 329-amino-acid chain: MTSNSTREVPSPVPAGALGLSLALASLIVAANLLLAVGIAGDRRLRSPPAGCFFLSLLLAGLLTGLALPALPVLWSQSRRGYWSCLFLYLAPNFCFLSLLANLLLVHGERYMAVLRPLRPRGSMRLALLLTWAAPLLFASLPALGWNHWAPGGNCSSQAVFPAPYLYLEIYGLLLPAVGAAALLSVRVLVTAHRQLQDIRRLERAVCRGAPSALARALTWRQARAQAGATLLFGLCWGPYVATLLLSVLAFEQRPPLGPGTLLSLISLGSASAAAVPVAMGLGDQRYTGPWRVAAQKWLRMLRGRPQSSPGPSTAYHTSSQSSVDLDLN.

Residues 1–19 are Extracellular-facing; the sequence is MTSNSTREVPSPVPAGALG. The N-linked (GlcNAc...) asparagine glycan is linked to Asn4. A helical membrane pass occupies residues 20-40; the sequence is LSLALASLIVAANLLLAVGIA. Residues 41–52 are Cytoplasmic-facing; that stretch reads GDRRLRSPPAGC. The chain crosses the membrane as a helical span at residues 53–73; that stretch reads FFLSLLLAGLLTGLALPALPV. The Extracellular portion of the chain corresponds to 74-85; that stretch reads LWSQSRRGYWSC. Cys85 and Cys155 are oxidised to a cystine. The chain crosses the membrane as a helical span at residues 86-106; it reads LFLYLAPNFCFLSLLANLLLV. Residues 107-125 are Cytoplasmic-facing; the sequence is HGERYMAVLRPLRPRGSMR. A helical transmembrane segment spans residues 126 to 146; it reads LALLLTWAAPLLFASLPALGW. Over 147–165 the chain is Extracellular; it reads NHWAPGGNCSSQAVFPAPY. An N-linked (GlcNAc...) asparagine glycan is attached at Asn154. The chain crosses the membrane as a helical span at residues 166–186; it reads LYLEIYGLLLPAVGAAALLSV. Residues 187–230 lie on the Cytoplasmic side of the membrane; sequence RVLVTAHRQLQDIRRLERAVCRGAPSALARALTWRQARAQAGAT. A helical transmembrane segment spans residues 231–251; that stretch reads LLFGLCWGPYVATLLLSVLAF. At 252–261 the chain is on the extracellular side; that stretch reads EQRPPLGPGT. A helical membrane pass occupies residues 262–282; the sequence is LLSLISLGSASAAAVPVAMGL. At 283–329 the chain is on the cytoplasmic side; the sequence is GDQRYTGPWRVAAQKWLRMLRGRPQSSPGPSTAYHTSSQSSVDLDLN. Residues 304–329 form a disordered region; the sequence is GRPQSSPGPSTAYHTSSQSSVDLDLN. The segment covering 306–329 has biased composition (polar residues); the sequence is PQSSPGPSTAYHTSSQSSVDLDLN.

This sequence belongs to the G-protein coupled receptor 1 family.

It localises to the cell membrane. Receptor for bile acid. Bile acid-binding induces its internalization, activation of extracellular signal-regulated kinase and intracellular cAMP production. May be involved in the suppression of macrophage functions by bile acids. Involved in bile acid promoted GLP1R secretion. The protein is G-protein coupled bile acid receptor 1 (GPBAR1) of Bos taurus (Bovine).